We begin with the raw amino-acid sequence, 58 residues long: Large ribosomal subunit protein bL32 (58 aa).

The protein belongs to the bacterial ribosomal protein bL32 family.

The chain is Large ribosomal subunit protein bL32 from Prochlorococcus marinus (strain MIT 9303).